Here is a 187-residue protein sequence, read N- to C-terminus: Large ribosomal subunit protein uL5 (187 aa).

Belongs to the universal ribosomal protein uL5 family. In terms of assembly, part of the 50S ribosomal subunit; part of the 5S rRNA/L5/L18/L25 subcomplex. Contacts the 5S rRNA and the P site tRNA. Forms a bridge to the 30S subunit in the 70S ribosome.

This is one of the proteins that bind and probably mediate the attachment of the 5S RNA into the large ribosomal subunit, where it forms part of the central protuberance. In the 70S ribosome it contacts protein S13 of the 30S subunit (bridge B1b), connecting the 2 subunits; this bridge is implicated in subunit movement. Contacts the P site tRNA; the 5S rRNA and some of its associated proteins might help stabilize positioning of ribosome-bound tRNAs. The protein is Large ribosomal subunit protein uL5 of Roseobacter denitrificans (strain ATCC 33942 / OCh 114) (Erythrobacter sp. (strain OCh 114)).